Reading from the N-terminus, the 429-residue chain is Serine--tRNA ligase (429 aa).

L-serine is bound at residue 235-237; sequence TAE. An ATP-binding site is contributed by 266-268; the sequence is RSE. Glutamate 289 serves as a coordination point for L-serine. 353–356 lines the ATP pocket; the sequence is EISS. Position 389 (serine 389) interacts with L-serine.

Belongs to the class-II aminoacyl-tRNA synthetase family. Type-1 seryl-tRNA synthetase subfamily. In terms of assembly, homodimer. The tRNA molecule binds across the dimer.

The protein localises to the cytoplasm. It carries out the reaction tRNA(Ser) + L-serine + ATP = L-seryl-tRNA(Ser) + AMP + diphosphate + H(+). It catalyses the reaction tRNA(Sec) + L-serine + ATP = L-seryl-tRNA(Sec) + AMP + diphosphate + H(+). The protein operates within aminoacyl-tRNA biosynthesis; selenocysteinyl-tRNA(Sec) biosynthesis; L-seryl-tRNA(Sec) from L-serine and tRNA(Sec): step 1/1. In terms of biological role, catalyzes the attachment of serine to tRNA(Ser). Is also able to aminoacylate tRNA(Sec) with serine, to form the misacylated tRNA L-seryl-tRNA(Sec), which will be further converted into selenocysteinyl-tRNA(Sec). This is Serine--tRNA ligase from Haemophilus influenzae (strain 86-028NP).